A 550-amino-acid chain; its full sequence is Chaperonin GroEL (550 aa).

ATP is bound by residues Thr30–Pro33, Lys51, Asp87–Thr91, Gly415, Asn479–Ala481, and Asp495. Residues Pro525–Met550 are disordered. Positions Asn540–Met550 are enriched in gly residues.

Belongs to the chaperonin (HSP60) family. As to quaternary structure, forms a cylinder of 14 subunits composed of two heptameric rings stacked back-to-back. Interacts with the co-chaperonin GroES.

It localises to the cytoplasm. The catalysed reaction is ATP + H2O + a folded polypeptide = ADP + phosphate + an unfolded polypeptide.. Its function is as follows. Together with its co-chaperonin GroES, plays an essential role in assisting protein folding. The GroEL-GroES system forms a nano-cage that allows encapsulation of the non-native substrate proteins and provides a physical environment optimized to promote and accelerate protein folding. The sequence is that of Chaperonin GroEL from Buchnera aphidicola subsp. Cinara cedri (strain Cc).